The primary structure comprises 210 residues: Probable nicotinate-nucleotide adenylyltransferase (210 aa).

This sequence belongs to the NadD family.

The enzyme catalyses nicotinate beta-D-ribonucleotide + ATP + H(+) = deamido-NAD(+) + diphosphate. It functions in the pathway cofactor biosynthesis; NAD(+) biosynthesis; deamido-NAD(+) from nicotinate D-ribonucleotide: step 1/1. In terms of biological role, catalyzes the reversible adenylation of nicotinate mononucleotide (NaMN) to nicotinic acid adenine dinucleotide (NaAD). This Methylococcus capsulatus (strain ATCC 33009 / NCIMB 11132 / Bath) protein is Probable nicotinate-nucleotide adenylyltransferase.